Consider the following 227-residue polypeptide: Cytidylate kinase (227 aa).

An ATP-binding site is contributed by 10–18; it reads GPASSGKST.

The protein belongs to the cytidylate kinase family. Type 1 subfamily.

Its subcellular location is the cytoplasm. It carries out the reaction CMP + ATP = CDP + ADP. The catalysed reaction is dCMP + ATP = dCDP + ADP. This chain is Cytidylate kinase, found in Streptococcus agalactiae serotype III (strain NEM316).